The primary structure comprises 311 residues: Methionyl-tRNA formyltransferase (311 aa).

Residue 110–113 coordinates (6S)-5,6,7,8-tetrahydrofolate; sequence SLLP.

This sequence belongs to the Fmt family.

It carries out the reaction L-methionyl-tRNA(fMet) + (6R)-10-formyltetrahydrofolate = N-formyl-L-methionyl-tRNA(fMet) + (6S)-5,6,7,8-tetrahydrofolate + H(+). Functionally, attaches a formyl group to the free amino group of methionyl-tRNA(fMet). The formyl group appears to play a dual role in the initiator identity of N-formylmethionyl-tRNA by promoting its recognition by IF2 and preventing the misappropriation of this tRNA by the elongation apparatus. The sequence is that of Methionyl-tRNA formyltransferase from Streptococcus equi subsp. equi (strain 4047).